Reading from the N-terminus, the 265-residue chain is Probable FAD synthase (265 aa).

It belongs to the PAPS reductase family. FAD1 subfamily.

It catalyses the reaction FMN + ATP + H(+) = FAD + diphosphate. It functions in the pathway cofactor biosynthesis; FAD biosynthesis; FAD from FMN: step 1/1. Functionally, adenylates FMN to FAD. This chain is Probable FAD synthase, found in Schizosaccharomyces pombe (strain 972 / ATCC 24843) (Fission yeast).